Consider the following 1392-residue polypeptide: DNA-directed RNA polymerase subunit beta'' (1392 aa).

Positions 224, 295, 302, and 305 each coordinate Zn(2+).

It belongs to the RNA polymerase beta' chain family. RpoC2 subfamily. In terms of assembly, in plastids the minimal PEP RNA polymerase catalytic core is composed of four subunits: alpha, beta, beta', and beta''. When a (nuclear-encoded) sigma factor is associated with the core the holoenzyme is formed, which can initiate transcription. The cofactor is Zn(2+).

The protein localises to the plastid. It localises to the chloroplast. The catalysed reaction is RNA(n) + a ribonucleoside 5'-triphosphate = RNA(n+1) + diphosphate. Functionally, DNA-dependent RNA polymerase catalyzes the transcription of DNA into RNA using the four ribonucleoside triphosphates as substrates. This Nicotiana sylvestris (Wood tobacco) protein is DNA-directed RNA polymerase subunit beta''.